The chain runs to 278 residues: Ribosomal RNA small subunit methyltransferase A (278 aa).

Positions 18, 20, 45, 66, 89, and 110 each coordinate S-adenosyl-L-methionine.

This sequence belongs to the class I-like SAM-binding methyltransferase superfamily. rRNA adenine N(6)-methyltransferase family. RsmA subfamily.

It is found in the cytoplasm. It carries out the reaction adenosine(1518)/adenosine(1519) in 16S rRNA + 4 S-adenosyl-L-methionine = N(6)-dimethyladenosine(1518)/N(6)-dimethyladenosine(1519) in 16S rRNA + 4 S-adenosyl-L-homocysteine + 4 H(+). Functionally, specifically dimethylates two adjacent adenosines (A1518 and A1519) in the loop of a conserved hairpin near the 3'-end of 16S rRNA in the 30S particle. May play a critical role in biogenesis of 30S subunits. The chain is Ribosomal RNA small subunit methyltransferase A from Cupriavidus metallidurans (strain ATCC 43123 / DSM 2839 / NBRC 102507 / CH34) (Ralstonia metallidurans).